The following is a 160-amino-acid chain: Probable nucleoside diphosphate kinase DDB_G0292928 (160 aa).

Residues Lys-12, Phe-61, Arg-103, Thr-109, Arg-122, and Asn-132 each coordinate ATP. His-135 functions as the Pros-phosphohistidine intermediate in the catalytic mechanism.

The protein belongs to the NDK family. Mg(2+) is required as a cofactor.

The catalysed reaction is a 2'-deoxyribonucleoside 5'-diphosphate + ATP = a 2'-deoxyribonucleoside 5'-triphosphate + ADP. The enzyme catalyses a ribonucleoside 5'-diphosphate + ATP = a ribonucleoside 5'-triphosphate + ADP. This chain is Probable nucleoside diphosphate kinase DDB_G0292928, found in Dictyostelium discoideum (Social amoeba).